A 186-amino-acid chain; its full sequence is UPF0200 protein PH1008 (186 aa).

7–14 (GMPGSGKG) serves as a coordination point for ATP.

The protein belongs to the UPF0200 family.

In Pyrococcus horikoshii (strain ATCC 700860 / DSM 12428 / JCM 9974 / NBRC 100139 / OT-3), this protein is UPF0200 protein PH1008.